The sequence spans 134 residues: UPF0299 membrane protein KPK_1586 (134 aa).

Transmembrane regions (helical) follow at residues 5 to 25, 26 to 46, 66 to 86, and 93 to 113; these read LTII…LYAG, IFIA…MLIL, ILIR…MQYW, and LGPV…VVSW.

The protein belongs to the UPF0299 family.

The protein localises to the cell inner membrane. This Klebsiella pneumoniae (strain 342) protein is UPF0299 membrane protein KPK_1586.